Here is a 508-residue protein sequence, read N- to C-terminus: Serine/threonine-protein kinase VRK2 (508 aa).

Positions 29 to 319 (WVLGKKIGSG…KKILNPHGIP (291 aa)) constitute a Protein kinase domain. ATP-binding positions include 35-43 (IGSGGFGLI) and Lys61. The Proton acceptor role is filled by Asp166. At Thr336 the chain carries Phosphothreonine. Positions 397–508 (TRRRQKYQES…MLVFLALFFL (112 aa)) are interaction with MAP3K7. Residue Ser406 is modified to Phosphoserine. Residues 487 to 507 (VYYYRIIIPVLLMLVFLALFF) traverse the membrane as a helical; Anchor for type IV membrane protein segment.

The protein belongs to the protein kinase superfamily. CK1 Ser/Thr protein kinase family. VRK subfamily. Isoform 1 interacts with MAP3K7, MAP2K7, MAP2K1 and KSR1. Isoform 1 and isoform 2 interact with RAN and MAPK8IP1. In terms of assembly, (Microbial infection) Isoform 1 interacts with Epstein-Barr virus BHRF1; this interaction is involved in protecting cells from apoptosis. As to quaternary structure, (Microbial infection) Isoform 1 interacts with vaccinia protein B12. Post-translationally, autophosphorylated. As to expression, isoform 1 and isoform 2 are expressed in various tumor cell lines. Expression of isoform 1 inversely correlates with ERBB2 in breast carcinomas (at protein level). Widely expressed. Highly expressed in fetal liver, skeletal muscle, pancreas, heart, peripheral blood leukocytes and testis.

It is found in the cytoplasm. It localises to the endoplasmic reticulum membrane. The protein resides in the mitochondrion membrane. The protein localises to the nucleus envelope. Its subcellular location is the nucleus. It carries out the reaction L-seryl-[protein] + ATP = O-phospho-L-seryl-[protein] + ADP + H(+). It catalyses the reaction L-threonyl-[protein] + ATP = O-phospho-L-threonyl-[protein] + ADP + H(+). RAN inhibits its autophosphorylation and its ability to phosphorylate histone H3. In terms of biological role, serine/threonine kinase that regulates several signal transduction pathways. Isoform 1 modulates the stress response to hypoxia and cytokines, such as interleukin-1 beta (IL1B) and this is dependent on its interaction with MAPK8IP1, which assembles mitogen-activated protein kinase (MAPK) complexes. Inhibition of signal transmission mediated by the assembly of MAPK8IP1-MAPK complexes reduces JNK phosphorylation and JUN-dependent transcription. Phosphorylates 'Thr-18' of p53/TP53, histone H3, and may also phosphorylate MAPK8IP1. Phosphorylates BANF1 and disrupts its ability to bind DNA and reduces its binding to LEM domain-containing proteins. Down-regulates the transactivation of transcription induced by ERBB2, HRAS, BRAF, and MEK1. Blocks the phosphorylation of ERK in response to ERBB2 and HRAS. Can also phosphorylate the following substrates that are commonly used to establish in vitro kinase activity: casein, MBP and histone H2B, but it is not sure that this is physiologically relevant. Functionally, phosphorylates 'Thr-18' of p53/TP53, as well as histone H3. Reduces p53/TP53 ubiquitination by MDM2, promotes p53/TP53 acetylation by EP300 and thereby increases p53/TP53 stability and activity. The protein is Serine/threonine-protein kinase VRK2 (VRK2) of Homo sapiens (Human).